Here is a 280-residue protein sequence, read N- to C-terminus: Fructose-1,6-bisphosphatase class 1 (280 aa).

4 residues coordinate Mg(2+): Glu-64, Asp-83, Leu-85, and Asp-86. Substrate-binding positions include 86–89, Tyr-190, and Lys-221; that span reads DGSS. A Mg(2+)-binding site is contributed by Glu-227.

This sequence belongs to the FBPase class 1 family. In terms of assembly, homotetramer. Mg(2+) serves as cofactor.

The protein resides in the cytoplasm. It carries out the reaction beta-D-fructose 1,6-bisphosphate + H2O = beta-D-fructose 6-phosphate + phosphate. Its pathway is carbohydrate biosynthesis; gluconeogenesis. The sequence is that of Fructose-1,6-bisphosphatase class 1 from Campylobacter hominis (strain ATCC BAA-381 / DSM 21671 / CCUG 45161 / LMG 19568 / NCTC 13146 / CH001A).